The primary structure comprises 426 residues: Synaptotagmin-13 (426 aa).

Residues 1–6 are Vesicular-facing; that stretch reads MVLSVP. A helical membrane pass occupies residues 7–29; sequence VIALGATLGTATSILALCGVTCL. Over 30 to 426 the chain is Cytoplasmic; the sequence is CRHMHPKKGL…QIAMWHQLHL (397 aa). C2 domains follow at residues 158-275 and 287-422; these read QAPK…AQWG and GAGE…AMWH.

It belongs to the synaptotagmin family. As to quaternary structure, interacts with NRXN1. Expressed in brain, pancreas and kidney.

It is found in the membrane. Functionally, may be involved in transport vesicle docking to the plasma membrane. This Homo sapiens (Human) protein is Synaptotagmin-13 (SYT13).